The sequence spans 6781 residues: Replicase polyprotein 1ab (6781 aa).

Positions 2–109 (ASNHVTLAFA…ELELTFGRRG (108 aa)) constitute a CoV Nsp1 globular domain. Glutamate 59, asparagine 95, glutamate 99, and glutamate 102 together coordinate ssDNA. One can recognise a CoV Nsp2 N-terminal domain in the interval 112–364 (IVPVDQYMCG…TKLKFDILSG (253 aa)). One can recognise a CoV Nsp2 middle domain in the interval 383–776 (SALVDIVDDA…AEMYNTYLST (394 aa)). Residues 778 to 895 (VENLVLAGVS…VPICFKKKGG (118 aa)) form the CoV Nsp2 C-terminal domain. Residues 896–991 (GDVKFSDEVS…VMVSQWPLND (96 aa)) form the Ubiquitin-like 1 domain. Residues 1009–1040 (IDSEGDEVDSSAPEKVADVANSEPGDDGLPVA) form a disordered region. Residues 1057–1296 (SFIKDTPSTV…EPVVKPFYSY (240 aa)) enclose the Peptidase C16 1 domain. The active-site For PL1-PRO activity is cysteine 1091. The C4-type 1; degenerate zinc finger occupies 1162–1193 (CGCGTGERIYEGCAFRMTPTLEPFPYGACAQC). Residues histidine 1239 and aspartate 1252 each act as for PL1-PRO activity in the active site. Positions 1297–1465 (KNVDFYQGDF…IFKEALVDTT (169 aa)) constitute a Macro domain. A Ubiquitin-like 2 domain is found at 1630–1685 (NKSVVIKVTEDTRSVKAVKVESTATYGQQIGPCLVNDTVVTDNKPVVADVVAKVVP). In terms of domain architecture, Peptidase C16 2 spans 1691-1951 (SHYGFDKAGE…LLDTMNYASE (261 aa)). Cysteine 1729 (for PL2-PRO activity) is an active-site residue. A C4-type 2; degenerate zinc finger spans residues 1808 to 1838 (DGCCCSKRVVTAPVVNASVLKLGVEDGLCPH). Residues histidine 1888 and aspartate 1901 each act as for PL2-PRO activity in the active site. 2 helical membrane passes run 1959 to 1979 (FMSRNLITVFLYILSILGLCF) and 2022 to 2042 (WFKVLGKFSLGIYALYALLFM). An HD1 region spans residues 1959-2170 (FMSRNLITVF…FGDEIVVFFI (212 aa)). The 3Ecto domain maps to 2038-2102 (ALLFMTIRFT…TQVVWQHLRD (65 aa)). Disulfide bonds link cysteine 2054–cysteine 2080 and cysteine 2072–cysteine 2077. Helical transmembrane passes span 2105–2125 (IGNVMPFFYLAFLAIFGGVYV), 2127–2147 (AITLYFIFQYLNSLGVFLGLQ), and 2150–2170 (IWFLQLVPFDVFGDEIVVFFI). Positions 2176 to 2266 (MFIKHVCLGC…VVKLNVQPTG (91 aa)) are Y1. The region spanning 2176–2516 (MFIKHVCLGC…PTVCIANKKG (341 aa)) is the CoV Nsp3 Y domain. Zn(2+)-binding residues include histidine 2180, cysteine 2185, cysteine 2190, cysteine 2193, cysteine 2226, histidine 2229, cysteine 2233, and cysteine 2236. Residues 2180–2193 (HVCLGCDKASCVAC) form a ZF1 region. The ZF2 stretch occupies residues 2226–2236 (CKKHNFFCLNC). The interval 2267 to 2356 (PATILIDKVE…LVDSALLASL (90 aa)) is Y2. Residues 2267–2516 (PATILIDKVE…PTVCIANKKG (250 aa)) form a coV-Y region. The interval 2357 to 2414 (SVDFGASLHSAFVSVLSNSFGKDLSSCNDMQDCKSTLGFDDVPLDTFNAAVAEAHRYD) is Y3. The interval 2415–2516 (VLLTDMSFNN…PTVCIANKKG (102 aa)) is Y4. The next 7 membrane-spanning stretches (helical) occupy residues 2528–2548 (FFWFLCLFIVAAFFALSFLDF), 2619–2639 (IPAGVYLAGKTLVFAINTIFG), 2654–2674 (GACIFNSACTTLSGLGGTAVY), 2754–2774 (GSDFVCGTGLFTLLMNVISVF), 2787–2807 (ILFNCIIAFVAVAVCFLFTKF), 2814–2834 (MSVGVFTVGACTLLNNVSYIV), and 2863–2883 (LGFLISYILIAPWWVLMVYAF). The segment at 2528 to 2883 (FFWFLCLFIV…PWWVLMVYAF (356 aa)) is HD2. The 96-residue stretch at 2902 to 2997 (LFEGDKFVGS…PTVSYNSTLQ (96 aa)) folds into the Nsp4C domain. In terms of domain architecture, Peptidase C30 spans 2998 to 3299 (AGLRKMAQPS…VRQMYGVNLQ (302 aa)). Residues histidine 3038 and cysteine 3141 each act as for 3CL-PRO activity in the active site. The next 7 membrane-spanning stretches (helical) occupy residues 3336–3356 (GYVTPMFACLSLLSSLLMFTL), 3361–3381 (LFFQVFLIPALIVTSCINLAF), 3399–3419 (LMGFNAQGLVNIFVCFVVTIL), 3431–3451 (PASSVTYVVALLTAAYNYFYA), 3454–3474 (ILSCAMTLFASVTGNWFVGAV), 3476–3496 (YKVAVYMALRFPTFVAIFGDI), and 3500–3520 (MFCYLVLGYFTCCFYGILYWF). The HD3 stretch occupies residues 3336-3520 (GYVTPMFACL…CCFYGILYWF (185 aa)). Residues 3580-3662 (SKLTDIKCSN…SYFNDNSMLQ (83 aa)) enclose the RdRp Nsp7 cofactor domain. The 195-residue stretch at 3663-3857 (SVASTYVGLP…LGCERIVKLQ (195 aa)) folds into the RdRp Nsp8 cofactor domain. Residues 3858-3965 (NNEIIPGKLK…GYIGATVRLQ (108 aa)) form the Nsp9 ssRNA-binding domain. Residues 3966–4103 (AGKQTEQAIN…CDRSIMQSTD (138 aa)) enclose the ExoN/MTase coactivator domain. Positions 4039, 4042, 4048, 4055, 4081, 4084, 4092, and 4094 each coordinate Zn(2+). Zinc fingers lie at residues 4039–4055 (CLYCRAHVEHPSMDGFC) and 4081–4094 (CKVCGCWLSNGCTC). The NiRAN domain maps to 4106–4355 (YLNRVRGSSA…ASECFVKSDI (250 aa)). The region spanning 4361-4459 (KSYDLLEYDF…WNNDLNLHSS (99 aa)) is the Nsp12 Interface domain. Residues histidine 4390, cysteine 4396, cysteine 4401, cysteine 4405, and cysteine 4582 each contribute to the Zn(2+) site. One can recognise a Nsp12 RNA-dependent RNA polymerase domain in the interval 4460 to 5027 (RLSINELLQF…NMYEKSAVLQ (568 aa)). The rdRp Fingers N-ter stretch occupies residues 4462-4676 (SINELLQFCS…HQKHLKSIVN (215 aa)). The interval 4677–4715 (TRGASVVIGTTKFYGGWDNMLKNLIDGVENPCLMGWDYP) is rdRp Palm N-ter. One can recognise a RdRp catalytic domain in the interval 4707–4869 (PCLMGWDYPK…CYNNDYASLG (163 aa)). Residues 4716-4774 (KCDRALPNMIRMISAMILGSKHTTCCSSTDRFFRLCNELAQVLTEVVYSNGGFYLKPGG) form a rdRp Fingers C-ter region. Positions 4737, 4740, and 4741 each coordinate Zn(2+). Residues 4775 to 4910 (TTSGDATTAY…NKGPHEFCSQ (136 aa)) are rdRp Palm C-ter. Catalysis depends on for RNA-directed RNA polymerase activity residues serine 4854, aspartate 4855, and aspartate 4856. A rdRp Thumb region spans residues 4911-5027 (HTMQIVDKEG…NMYEKSAVLQ (117 aa)). In terms of domain architecture, CV ZBD spans 5028 to 5140 (SAGLCVVCGS…EDFNRIATSD (113 aa)). Zn(2+) contacts are provided by cysteine 5032, cysteine 5035, cysteine 5043, cysteine 5046, cysteine 5053, cysteine 5056, histidine 5060, histidine 5066, cysteine 5077, cysteine 5082, cysteine 5099, and histidine 5102. In terms of domain architecture, (+)RNA virus helicase ATP-binding spans 5275-5466 (STIHKLHPAF…MCALKPDVFL (192 aa)). 5310 to 5317 (GPPGSGKS) provides a ligand contact to ATP. Positions 5467-5636 (HKCYRCPAEI…EGCGLFKDCS (170 aa)) constitute a (+)RNA virus helicase C-terminal domain. The 215-residue stretch at 5696–5910 (LFCTRDFAMR…RCLAIHDCFV (215 aa)) folds into the ExoN domain. Catalysis depends on for exoribonuclease activity residues aspartate 5714, glutamate 5716, and glutamate 5815. Residues cysteine 5831, cysteine 5833, cysteine 5849, histidine 5852, histidine 5880, cysteine 5884, and histidine 5887 each coordinate Zn(2+). Catalysis depends on for exoribonuclease activity residues histidine 5891 and aspartate 5896. Cysteine 5902 provides a ligand contact to Zn(2+). The region spanning 5919-6140 (YPFIGNEAVI…NLWQTFSNNL (222 aa)) is the N7-MTase domain. S-adenosyl-L-methionine is bound at residue 5954 to 5960 (DIGNPKG). The tract at residues 6031–6045 (CNGGSLYVNNHAFHT) is gpppA-binding. Cysteine 6069, cysteine 6086, cysteine 6097, and histidine 6100 together coordinate Zn(2+). A Nsp15 N-terminal oligomerization domain is found at 6142-6202 (GLENIAFNVL…NVAFELYAKR (61 aa)). Residues 6203–6320 (KVGLTPPITI…IYTRKNGKFE (118 aa)) enclose the AV-Nsp11N/CoV-Nsp15M domain. The NendoU domain maps to 6337–6477 (SPRSDMEKDF…KDHKLQTFYP (141 aa)). Residues histidine 6367, histidine 6382, and lysine 6423 each act as for uridylate-specific endoribonuclease activity in the active site. Residues 6481–6777 (ASEWKCGYSM…AICGFSNHLV (297 aa)) form the Nidovirus-type SAM-dependent 2'-O-MTase domain. Active-site for 2'-O-methyltransferase residues include lysine 6525, aspartate 6609, lysine 6649, and glutamate 6682.

Belongs to the coronaviruses polyprotein 1ab family. Interacts with PL-PRO and nsp6. In terms of assembly, monomer. Homodimer; disulfide-linked. As to quaternary structure, interacts with nsp8 and nsp12 to form the replication-transcription complex (RTC): nsp12, nsp7, two subunits of nsp8, and up to two subunits of nsp13. Eight copies of nsp7 and eight copies of nsp8 assemble to form a heterohexadecamer dsRNA-encircling ring structure. Interacts with nsp7, nsp13 and nsp12 to form the replication-transcription complex (RTC): nsp12, nsp7, two subunits of nsp8, and up to two subunits of nsp13. Eight copies of nsp7 and eight copies of nsp8 assemble to form a heterohexadecamer dsRNA-encircling ring structure. In terms of assembly, homodimer. As to quaternary structure, forms a dodecamer and interacts with nsp14 and nsp16; these interactions enhance nsp14 and nsp16 enzymatic activities. Mn(2+) serves as cofactor. Specific enzymatic cleavages in vivo by its own proteases yield mature proteins. 3CL-PRO and PL-PRO proteinases are autocatalytically processed.

It localises to the host cytoplasm. It is found in the host nucleus. The protein localises to the host membrane. The protein resides in the host perinuclear region. Its subcellular location is the host endoplasmic reticulum. It localises to the host endoplasmic reticulum-Golgi intermediate compartment. It catalyses the reaction Thiol-dependent hydrolysis of ester, thioester, amide, peptide and isopeptide bonds formed by the C-terminal Gly of ubiquitin (a 76-residue protein attached to proteins as an intracellular targeting signal).. It carries out the reaction a 5'-end diphospho-ribonucleoside in mRNA + GTP + H(+) = a 5'-end (5'-triphosphoguanosine)-ribonucleoside in mRNA + diphosphate. The catalysed reaction is RNA(n) + a ribonucleoside 5'-triphosphate = RNA(n+1) + diphosphate. The enzyme catalyses ATP + H2O = ADP + phosphate + H(+). It catalyses the reaction a 5'-end (5'-triphosphoguanosine)-ribonucleoside in mRNA + S-adenosyl-L-methionine = a 5'-end (N(7)-methyl 5'-triphosphoguanosine)-ribonucleoside in mRNA + S-adenosyl-L-homocysteine. It carries out the reaction uridylyl-uridylyl-ribonucleotide-RNA = a 3'-end uridylyl-2',3'-cyclophospho-uridine-RNA + a 5'-end dephospho-ribonucleoside-RNA. The catalysed reaction is a 5'-end (N(7)-methyl 5'-triphosphoguanosine)-ribonucleoside in mRNA + S-adenosyl-L-methionine = a 5'-end (N(7)-methyl 5'-triphosphoguanosine)-(2'-O-methyl-ribonucleoside) in mRNA + S-adenosyl-L-homocysteine + H(+). Inhibited by the substrate-analog Cbz-Val-Asn-Ser-Thr-Leu-Gln-CMK. Inhibited by (R)-16. Functionally, multifunctional protein responsible for the transcription of negative stranded RNA, leader RNA, subgenomic mRNAs and progeny virion RNA as well as proteinases responsible for the cleavage of the polyprotein into functional products. Plays a role in the inhibition of host interferon and pro-inflammatory cytokines production. Suppresses host RELA/p65 activation by blocking NFKBIA phosphorylation. Targets also the RLR pathway downstream of the IRF3 activation by targeting host CREBBP to proteasomal degradation. Its function is as follows. Responsible for the cleavages located at the N-terminus of the replicase polyprotein. Participates together with nsp4 in the assembly of virally-induced cytoplasmic double-membrane vesicles necessary for viral replication. Forms a molecular pore spanning the double membrane of the coronavirus replication organelle. In addition, PLP2 possesses a deubiquitinating/deISGylating activity and processes both 'Lys-48'- and 'Lys-63'-linked polyubiquitin chains from cellular substrates. PLP2 also antagonizes innate immune induction of type I interferon by blocking the nuclear translocation of host IRF-3. Participates in the inhibition of the integrated stress response (ISR) in the infected host cell. In terms of biological role, participates in the assembly of virally-induced cytoplasmic double-membrane vesicles necessary for viral replication. Functionally, responsible for the majority of cleavages as it cleaves the C-terminus of replicase polyprotein at 11 sites. Recognizes substrates containing the core sequence [ILMVF]-Q-|-[SGACN]. Also contains an ADP-ribose-1''-phosphate (ADRP)-binding function. Participates in the inhibition of the integrated stress response (ISR) in the infected host cell. Plays a role in the initial induction of autophagosomes from host endoplasmic reticulum. Later, limits the expansion of these phagosomes that are no longer able to deliver viral components to lysosomes. Its function is as follows. Plays a role in viral RNA synthesis. Forms a hexadecamer with nsp8 (8 subunits of each) that may participate in viral replication by acting as a primase. Alternatively, may synthesize substantially longer products than oligonucleotide primers. In terms of biological role, plays a role in viral RNA synthesis. Forms a hexadecamer with nsp7 (8 subunits of each) that may participate in viral replication by acting as a primase. Alternatively, may synthesize substantially longer products than oligonucleotide primers. Functionally, forms a primer, NSP9-pU, which is utilized by the polymerase for the initiation of RNA chains. Interacts with ribosome signal recognition particle RNA (SRP). Together with NSP8, suppress protein integration into the cell membrane, thereby disrupting host immune defenses. Plays a pivotal role in viral transcription by stimulating both nsp14 3'-5' exoribonuclease and nsp16 2'-O-methyltransferase activities. Therefore plays an essential role in viral mRNAs cap methylation. Its function is as follows. RNA-directed RNA polymerase that catalyzes the transcription of viral genomic and subgenomic RNAs. Acts in complex with nsp7 and nsp8 to transcribe both the minus and positive strands of genomic RNA. The kinase-like NiRAN domain of NSP12 attaches one or more nucleotides to the amino terminus of NSP9, forming a covalent RNA-protein intermediate that serves as transcription/replication primer. Subgenomic RNAs (sgRNAs) are formed by discontinuous transcription: The polymerase has the ability to pause at transcription-regulating sequences (TRS) and jump to the leader TRS, resulting in a major deletion. This creates a series of subgenomic RNAs that are replicated, transcribed and translated. In addition, Nsp12 is a subunit of the viral RNA capping enzyme that catalyzes the RNA guanylyltransferase reaction for genomic and sub-genomic RNAs. Subsequently, the NiRAN domain transfers RNA to GDP, and forms the core cap structure GpppA-RNA. In terms of biological role, plays a role in viral RNA synthesis. Multi-functional protein with a zinc-binding domain in N-terminus displaying RNA and DNA duplex-unwinding activities with 5' to 3' polarity. ATPase activity is strongly stimulated by poly(U), poly(dT), poly(C), poly(dA), but not by poly(G). Functionally, plays a role in viral RNA synthesis through two distinct activities. The N7-guanine methyltransferase activity plays a role in the formation of the cap structure GpppA-RNA. The proofreading exoribonuclease reduces the sensitivity of the virus to RNA mutagens during replication. This activity acts on both ssRNA and dsRNA in a 3'-5' direction. Plays a role in viral transcription/replication and prevents the simultaneous activation of host cell dsRNA sensors, such as MDA5/IFIH1, OAS, and PKR. Acts by degrading the 5'-polyuridines generated during replication of the poly(A) region of viral genomic and subgenomic RNAs. Catalyzes a two-step reaction in which a 2'3'-cyclic phosphate (2'3'-cP) is first generated by 2'-O transesterification, which is then hydrolyzed to a 3'-phosphate (3'-P). If not degraded, poly(U) RNA would hybridize with poly(A) RNA tails and activate host dsRNA sensors. Decreases the RNA levels and thus the expression of host TBK1 and IRF3, antagonizing the host innate response. The chain is Replicase polyprotein 1ab (rep) from Sus scrofa (Pig).